We begin with the raw amino-acid sequence, 515 residues long: Bifunctional purine biosynthesis protein PurH (515 aa).

Positions 1–145 (MTKRALISVS…KNHASVTVVV (145 aa)) constitute an MGS-like domain.

It belongs to the PurH family.

The enzyme catalyses (6R)-10-formyltetrahydrofolate + 5-amino-1-(5-phospho-beta-D-ribosyl)imidazole-4-carboxamide = 5-formamido-1-(5-phospho-D-ribosyl)imidazole-4-carboxamide + (6S)-5,6,7,8-tetrahydrofolate. The catalysed reaction is IMP + H2O = 5-formamido-1-(5-phospho-D-ribosyl)imidazole-4-carboxamide. It functions in the pathway purine metabolism; IMP biosynthesis via de novo pathway; 5-formamido-1-(5-phospho-D-ribosyl)imidazole-4-carboxamide from 5-amino-1-(5-phospho-D-ribosyl)imidazole-4-carboxamide (10-formyl THF route): step 1/1. Its pathway is purine metabolism; IMP biosynthesis via de novo pathway; IMP from 5-formamido-1-(5-phospho-D-ribosyl)imidazole-4-carboxamide: step 1/1. In Streptococcus pyogenes serotype M12 (strain MGAS2096), this protein is Bifunctional purine biosynthesis protein PurH.